The following is a 687-amino-acid chain: C-mannosyltransferase dpy-19 (687 aa).

A run of 11 helical transmembrane segments spans residues 24–44 (GISGNLWLATVVLIGLFVGFL), 170–190 (ITGVFVVAGTVATSLFYLGVL), 191–211 (VSDSIFGGILSVLCFAFNHGE), 223–243 (ESFAFPFIIGHIAILTYIIKY), 253–273 (LLISAAVPALLFWQFTQFAFF), 276–296 (ICSIFAAFSMDLVPLDTAKTI), 303–323 (AFFISFVMLFGNEMMIAALYF), 324–344 (PSIWALATVIYISPMLAGIRL), 347–367 (LYLLILALIFGSITLGLKVGF), 415–435 (LSSTLLIPLALLSIGAFSWDF), and 454–474 (GEVIYNLVQLICSTTMAVLIM).

Belongs to the dpy-19 family.

It is found in the endoplasmic reticulum membrane. Its function is as follows. C-mannosyltransferase that mediates C-mannosylation of tryptophan residues on target proteins such as unc-5 and mig-21. Mediates the attachment of alpha-mannose in C-C linkage to the C2 of the indole ring of tryptophan. C-mannosylation takes place in the endoplasmic reticulum and frequently found in thrombospondin (TSP) type-1 repeats and in the WSXWS motif of type I cytokine receptors. Required to orient neuroblasts QL and QR correctly on the anterior/posterior (A/P) axis: QL and QR are born in the same A/P position, but polarize and migrate left/right asymmetrically, QL migrates toward the posterior and QR migrates toward the anterior. Required with unc-40 to express mab-5 correctly in the Q cell descendants. This is C-mannosyltransferase dpy-19 from Caenorhabditis briggsae.